The sequence spans 341 residues: Methionine import ATP-binding protein MetN 2 (341 aa).

One can recognise an ABC transporter domain in the interval 2-241 (IKLNQIVKRY…PQHEVTKRFV (240 aa)). 38–45 (GFSGAGKS) serves as a coordination point for ATP.

It belongs to the ABC transporter superfamily. Methionine importer (TC 3.A.1.24) family. In terms of assembly, the complex is composed of two ATP-binding proteins (MetN), two transmembrane proteins (MetI) and a solute-binding protein (MetQ).

The protein resides in the cell membrane. It carries out the reaction L-methionine(out) + ATP + H2O = L-methionine(in) + ADP + phosphate + H(+). It catalyses the reaction D-methionine(out) + ATP + H2O = D-methionine(in) + ADP + phosphate + H(+). Part of the ABC transporter complex MetNIQ involved in methionine import. Responsible for energy coupling to the transport system. This Staphylococcus epidermidis (strain ATCC 35984 / DSM 28319 / BCRC 17069 / CCUG 31568 / BM 3577 / RP62A) protein is Methionine import ATP-binding protein MetN 2.